The sequence spans 143 residues: Putative pre-16S rRNA nuclease (143 aa).

It belongs to the YqgF nuclease family.

The protein localises to the cytoplasm. Functionally, could be a nuclease involved in processing of the 5'-end of pre-16S rRNA. The polypeptide is Putative pre-16S rRNA nuclease (Salinibacter ruber (strain DSM 13855 / M31)).